A 114-amino-acid polypeptide reads, in one-letter code: Large ribosomal subunit protein uL18 (114 aa).

It belongs to the universal ribosomal protein uL18 family. As to quaternary structure, part of the 50S ribosomal subunit; part of the 5S rRNA/L5/L18/L25 subcomplex. Contacts the 5S and 23S rRNAs.

In terms of biological role, this is one of the proteins that bind and probably mediate the attachment of the 5S RNA into the large ribosomal subunit, where it forms part of the central protuberance. This is Large ribosomal subunit protein uL18 from Azobacteroides pseudotrichonymphae genomovar. CFP2.